The following is a 94-amino-acid chain: Preprofallaxidin-9 (94 aa).

A signal peptide spans 1 to 22; it reads MASLKKSLFLVLFLGLVSLSIC. Residues 23-46 constitute a propeptide that is removed on maturation; it reads EEEKRENEEDAEDENHEEESEEKR. Residues 27-46 are disordered; it reads RENEEDAEDENHEEESEEKR. Acidic residues predominate over residues 30–42; the sequence is EEDAEDENHEEES. Residue leucine 62 is modified to Leucine amide. Positions 66–70 are excised as a propeptide; that stretch reads SEEKR. At methionine 75 the chain carries Methionine amide. The propeptide occupies 79-83; sequence SEEKR. Position 88 is a methionine amide (methionine 88). Residues 92–94 constitute a propeptide that is removed on maturation; the sequence is SEE.

This sequence belongs to the frog skin active peptide (FSAP) family. Brevinin subfamily. In terms of tissue distribution, expressed by the skin glands.

The protein localises to the secreted. Its function is as follows. Fallaxidin-1.3 shows no antibacterial activity against Gram-positive or Gram-negative bacteria. Does not inhibit the formation of NO by neuronal nitric oxide synthase. Has no effect on splenocyte proliferation or smooth muscle contraction. Fallaxidin-3.2 shows antibacterial activity against the Gram-positive bacteria E.faecalis (MIC=100 uM) and L.lactis (MIC=500 uM). No antibacterial activity against the Gram-positive bacteria B.cereus, L.innocua, M.luteus, S.epidermidis, S.uberis and S.aureus, or the Gram-negative bacteria E.cloacae and E.coli. The protein is Preprofallaxidin-9 of Litoria fallax (Eastern dwarf tree frog).